A 139-amino-acid chain; its full sequence is Large ribosomal subunit protein uL16 (139 aa).

The segment covering 1–16 (MLIPKRTKYRKQHRPD) has biased composition (basic residues). A disordered region spans residues 1-23 (MLIPKRTKYRKQHRPDRHGMSKG).

It belongs to the universal ribosomal protein uL16 family. As to quaternary structure, part of the 50S ribosomal subunit.

In terms of biological role, binds 23S rRNA and is also seen to make contacts with the A and possibly P site tRNAs. This chain is Large ribosomal subunit protein uL16, found in Bifidobacterium animalis subsp. lactis (strain AD011).